A 305-amino-acid polypeptide reads, in one-letter code: D-alanine--D-alanine ligase (305 aa).

Positions 107–299 (KKMLCYHGIA…FDELVERILA (193 aa)) constitute an ATP-grasp domain. ATP is bound at residue 134 to 186 (PDYPLVVKPAREGSTIGISIVHDEQELAAGLEEAFRHDDLVLVEQFIAGAEVT). Residues aspartate 254, glutamate 266, and asparagine 268 each coordinate Mg(2+).

This sequence belongs to the D-alanine--D-alanine ligase family. It depends on Mg(2+) as a cofactor. Mn(2+) is required as a cofactor.

It localises to the cytoplasm. The catalysed reaction is 2 D-alanine + ATP = D-alanyl-D-alanine + ADP + phosphate + H(+). Its pathway is cell wall biogenesis; peptidoglycan biosynthesis. Its function is as follows. Cell wall formation. This Syntrophotalea carbinolica (strain DSM 2380 / NBRC 103641 / GraBd1) (Pelobacter carbinolicus) protein is D-alanine--D-alanine ligase.